The sequence spans 177 residues: Large ribosomal subunit protein uL6 (177 aa).

It belongs to the universal ribosomal protein uL6 family. As to quaternary structure, part of the 50S ribosomal subunit.

Its function is as follows. This protein binds to the 23S rRNA, and is important in its secondary structure. It is located near the subunit interface in the base of the L7/L12 stalk, and near the tRNA binding site of the peptidyltransferase center. The chain is Large ribosomal subunit protein uL6 from Vibrio atlanticus (strain LGP32) (Vibrio splendidus (strain Mel32)).